Here is a 291-residue protein sequence, read N- to C-terminus: Bifunctional protein FolD (291 aa).

Residues 171 to 173 (GVS) and I239 contribute to the NADP(+) site.

Belongs to the tetrahydrofolate dehydrogenase/cyclohydrolase family. As to quaternary structure, homodimer.

The catalysed reaction is (6R)-5,10-methylene-5,6,7,8-tetrahydrofolate + NADP(+) = (6R)-5,10-methenyltetrahydrofolate + NADPH. It carries out the reaction (6R)-5,10-methenyltetrahydrofolate + H2O = (6R)-10-formyltetrahydrofolate + H(+). It participates in one-carbon metabolism; tetrahydrofolate interconversion. In terms of biological role, catalyzes the oxidation of 5,10-methylenetetrahydrofolate to 5,10-methenyltetrahydrofolate and then the hydrolysis of 5,10-methenyltetrahydrofolate to 10-formyltetrahydrofolate. This chain is Bifunctional protein FolD, found in Xylella fastidiosa (strain Temecula1 / ATCC 700964).